A 66-amino-acid chain; its full sequence is Large ribosomal subunit protein bL31 (66 aa).

Zn(2+)-binding residues include cysteine 16, cysteine 18, cysteine 36, and cysteine 39.

Belongs to the bacterial ribosomal protein bL31 family. Type A subfamily. As to quaternary structure, part of the 50S ribosomal subunit. Zn(2+) serves as cofactor.

Binds the 23S rRNA. The sequence is that of Large ribosomal subunit protein bL31 from Pelobacter propionicus (strain DSM 2379 / NBRC 103807 / OttBd1).